The following is a 283-amino-acid chain: MNWTGLYTLLSGVNRHSTAIGRVWLSVIFIFRIMVLVVAAESVWGDEKSSFICNTLQPGCNSVCYDQFFPISHVRLWSLQLILVSTPALLVAMHVAHQQHIEKKMLRLEGHGDPLHLEEVKRHKVHISGTLWWTYVISVVFRLLFEAVFMYVFYLLYPGYAMVRLVKCDVYPCPNTVDCFVSRPTEKTVFTVFMLAASGICIILNVAEVVYLIIRACARRAQRRSNPPSRKGSGFGHRLSPEYKQNEINKLLSEQDGSLKDILRRSPGTGAGLAEKSDRCSAC.

Residues 1 to 22 are Cytoplasmic-facing; that stretch reads MNWTGLYTLLSGVNRHSTAIGR. A helical membrane pass occupies residues 23-45; it reads VWLSVIFIFRIMVLVVAAESVWG. Topologically, residues 46–75 are extracellular; the sequence is DEKSSFICNTLQPGCNSVCYDQFFPISHVR. Residues 76–95 traverse the membrane as a helical segment; the sequence is LWSLQLILVSTPALLVAMHV. Residues 96 to 130 lie on the Cytoplasmic side of the membrane; the sequence is AHQQHIEKKMLRLEGHGDPLHLEEVKRHKVHISGT. A helical transmembrane segment spans residues 131–153; sequence LWWTYVISVVFRLLFEAVFMYVF. Residues 154–191 lie on the Extracellular side of the membrane; it reads YLLYPGYAMVRLVKCDVYPCPNTVDCFVSRPTEKTVFT. Residues 192–214 form a helical membrane-spanning segment; sequence VFMLAASGICIILNVAEVVYLII. Topologically, residues 215 to 283 are cytoplasmic; the sequence is RACARRAQRR…AEKSDRCSAC (69 aa). S233, S258, S266, and S277 each carry phosphoserine.

It belongs to the connexin family. Beta-type (group I) subfamily. As to quaternary structure, a connexon is composed of a hexamer of connexins. Interacts with CNST.

It localises to the cell membrane. The protein localises to the cell junction. It is found in the gap junction. One gap junction consists of a cluster of closely packed pairs of transmembrane channels, the connexons, through which materials of low MW diffuse from one cell to a neighboring cell. The protein is Gap junction beta-1 protein (GJB1) of Homo sapiens (Human).